The chain runs to 746 residues: Zinc finger protein 366 (746 aa).

A disordered region spans residues 1 to 64 (MQKAMKMVKD…FRYEPSPGDL (64 aa)). C2H2-type zinc fingers lie at residues 250–272 (WQCPTCEKSYTSKYNLVTHILGH), 278–300 (HACSRCGKLFKQLSHLHTHMLTH), 306–328 (HKCQVCHKAFTQTSHLKRHMMQH), 334–356 (HNCRVCSRGFAYPSELKAHEAKH), 362–384 (NICVECGLDFPTLAQLKRHLTTH), 390–412 (YNCSECDKTFQYPSQLQNHMMKH), 418–440 (YICSECGMEFVQPHHLKQHSLTH), 446–468 (HKCGICGREFTLLANMKRHVLIH), 474–496 (YQCHLCYKSFVQKQTLKAHMIVH), 502–524 (FKCKLCGKEFNRMHNLMGHLHLH), and 530–553 (FKCLYCPSKFTLKGNLTRHMKVKH). The interval 452 to 746 (GREFTLLANM…MEKQAVLLGI (295 aa)) is interaction with NRIP1. The PXDLS signature appears at 587-591 (PFDLS). A disordered region spans residues 587-689 (PFDLSQKRSA…DHEGSDIDCE (103 aa)). Residues 613–627 (CQEEEEEAGEEDNCY) show a composition bias toward acidic residues. The segment covering 675 to 689 (EDRSEDHEGSDIDCE) has biased composition (basic and acidic residues).

In terms of assembly, interacts with ESR1 and NRIP1. Interacts (via PXDLS motif) with CTBP1. In terms of tissue distribution, expressed in immature and mature dendritic cells (DCs).

The protein resides in the nucleus. Functionally, has transcriptional repression activity. Acts as a corepressor of ESR1; the function seems to involve CTBP1 and histone deacetylases. The chain is Zinc finger protein 366 from Mus musculus (Mouse).